The chain runs to 397 residues: Succinate--CoA ligase [ADP-forming] subunit beta (397 aa).

The region spanning 9-254 (KALLKSFGAP…ETEQDAKELE (246 aa)) is the ATP-grasp domain. ATP-binding positions include Lys46, 53-55 (GRG), Glu109, Ala112, and Glu117. Positions 209 and 223 each coordinate Mg(2+). Residues Asn274 and 331–333 (GIM) contribute to the substrate site.

The protein belongs to the succinate/malate CoA ligase beta subunit family. Heterotetramer of two alpha and two beta subunits. Mg(2+) is required as a cofactor.

The enzyme catalyses succinate + ATP + CoA = succinyl-CoA + ADP + phosphate. The catalysed reaction is GTP + succinate + CoA = succinyl-CoA + GDP + phosphate. Its pathway is carbohydrate metabolism; tricarboxylic acid cycle; succinate from succinyl-CoA (ligase route): step 1/1. In terms of biological role, succinyl-CoA synthetase functions in the citric acid cycle (TCA), coupling the hydrolysis of succinyl-CoA to the synthesis of either ATP or GTP and thus represents the only step of substrate-level phosphorylation in the TCA. The beta subunit provides nucleotide specificity of the enzyme and binds the substrate succinate, while the binding sites for coenzyme A and phosphate are found in the alpha subunit. The chain is Succinate--CoA ligase [ADP-forming] subunit beta from Hyphomonas neptunium (strain ATCC 15444).